Reading from the N-terminus, the 294-residue chain is Sarcotoxin-2A (294 aa).

Positions 1 to 22 (MKSFVFFAACMAIIALSSLVQA) are cleaved as a signal peptide. The propeptide at 23-24 (YP) is removed by a dipeptidylpeptidase. Pyrrolidone carboxylic acid is present on Q25. R293 carries the post-translational modification Arginine amide.

It belongs to the attacin/sarcotoxin-2 family. Synthesized by the fat body and is eventually secreted into the hemolymph.

It is found in the secreted. Sarcotoxin II is an antibacterial protein which plays a role in the inflammatory response of this insect. The main effect of sarcotoxin II on E.coli may be the inhibition of cell wall synthesis, including septum formation. This Sarcophaga peregrina (Flesh fly) protein is Sarcotoxin-2A.